Reading from the N-terminus, the 230-residue chain is Cytochrome b6-f complex iron-sulfur subunit, chloroplastic (230 aa).

The span at 1–16 shows a compositional bias: low complexity; the sequence is MASTTLSATPTPSQLS. Residues 1 to 20 form a disordered region; it reads MASTTLSATPTPSQLSAAKN. Residues 1–56 constitute a chloroplast transit peptide; that stretch reads MASTTLSATPTPSQLSAAKNGAYSPSRALLGKTARGLYPEKEMVSRKVTCQATSIP. A helical membrane pass occupies residues 73–93; sequence LLGALSLPTAGMLIPYGAFFV. One can recognise a Rieske domain in the interval 116–212; that stretch reads AAAWLKTHGP…CDISEEGKVV (97 aa). [2Fe-2S] cluster contacts are provided by Cys-158, His-160, Cys-176, and His-179. Residues Cys-163 and Cys-178 are joined by a disulfide bond.

The protein belongs to the Rieske iron-sulfur protein family. The 4 large subunits of the cytochrome b6-f complex are cytochrome b6, subunit IV (17 kDa polypeptide, petD), cytochrome f and the Rieske protein, while the 4 small subunits are petG, petL, petM and petN. The complex functions as a dimer. The cofactor is [2Fe-2S] cluster.

The protein resides in the plastid. It localises to the chloroplast thylakoid membrane. The enzyme catalyses 2 oxidized [plastocyanin] + a plastoquinol + 2 H(+)(in) = 2 reduced [plastocyanin] + a plastoquinone + 4 H(+)(out). Component of the cytochrome b6-f complex, which mediates electron transfer between photosystem II (PSII) and photosystem I (PSI), cyclic electron flow around PSI, and state transitions. The polypeptide is Cytochrome b6-f complex iron-sulfur subunit, chloroplastic (petC) (Fritillaria agrestis (Stinkbells)).